We begin with the raw amino-acid sequence, 392 residues long: Phosphoglycerate kinase (392 aa).

Substrate-binding positions include 21-23 (DFN), R36, 59-62 (HLGR), R118, and R151. Residues K201, G292, E323, and 349–352 (GGDS) contribute to the ATP site.

It belongs to the phosphoglycerate kinase family. As to quaternary structure, monomer.

Its subcellular location is the cytoplasm. The catalysed reaction is (2R)-3-phosphoglycerate + ATP = (2R)-3-phospho-glyceroyl phosphate + ADP. Its pathway is carbohydrate degradation; glycolysis; pyruvate from D-glyceraldehyde 3-phosphate: step 2/5. The protein is Phosphoglycerate kinase of Borrelia turicatae (strain 91E135).